We begin with the raw amino-acid sequence, 289 residues long: Rhodopsin (289 aa).

The Extracellular portion of the chain corresponds to 1-7 (YLVNPAA). Residues 8 to 32 (YAALGAYMFLLILIGFPVNFLTLYV) form a helical membrane-spanning segment. Residues 33–44 (TIEHKKLRTPLN) lie on the Cytoplasmic side of the membrane. A helical transmembrane segment spans residues 45-67 (YILLNLAVANLFMVLGGFTTTMY). Residues 68-81 (TSMHGYFVLGRLGC) are Extracellular-facing. Cys81 and Cys158 form a disulfide bridge. The helical transmembrane segment at 82–104 (NLEGFFATMGGEIALWSLVVLAI) threads the bilayer. The 'Ionic lock' involved in activated form stabilization signature appears at 105–107 (ERW). Residues 105–123 (ERWIVVCKPISNFRFTEDH) lie on the Cytoplasmic side of the membrane. Residues 124–144 (AIMGLAFTWVMALSCAVPPLV) form a helical membrane-spanning segment. At 145–173 (GWSRYIPEGMQCSCGVDYYTRAEGFNNES) the chain is on the extracellular side. Asn171 carries N-linked (GlcNAc...) asparagine glycosylation. The helical transmembrane segment at 174–195 (FVIYMFIVHFLTPLIIISFCYG) threads the bilayer. Topologically, residues 196 to 223 (RLLCAVKEAAAAQQESETTQRAEREVSR) are cytoplasmic. A helical transmembrane segment spans residues 224-245 (MVVMMVISFLMCWLPYASVAWY). At 246–257 (IFCNQGSEFGPI) the chain is on the extracellular side. The helical transmembrane segment at 258 to 279 (FMTLPAFFAKSSAIYNPLIYIC) threads the bilayer. Lys267 carries the N6-(retinylidene)lysine modification. The Cytoplasmic segment spans residues 280–289 (MNKQFRHCMI).

It belongs to the G-protein coupled receptor 1 family. Opsin subfamily. Phosphorylated on some or all of the serine and threonine residues present in the C-terminal region. In terms of processing, contains one covalently linked retinal chromophore.

Its subcellular location is the membrane. The protein localises to the cell projection. It is found in the cilium. It localises to the photoreceptor outer segment. In terms of biological role, photoreceptor required for image-forming vision at low light intensity. While most salt water fish species use retinal as chromophore, most freshwater fish use 3-dehydroretinal, or a mixture of retinal and 3-dehydroretinal. Light-induced isomerization of 11-cis to all-trans retinal triggers a conformational change that activates signaling via G-proteins. Subsequent receptor phosphorylation mediates displacement of the bound G-protein alpha subunit by arrestin and terminates signaling. The sequence is that of Rhodopsin (rho) from Cottocomephorus inermis (Longfin Baikal sculpin).